Reading from the N-terminus, the 683-residue chain is Zinc finger protein 418 (683 aa).

Residues 48 to 123 (VTIEDVTVYF…TPKQGQLRQK (76 aa)) enclose the KRAB domain. Residues 102–120 (QSLSQTEAPQVRTPKQGQL) show a composition bias toward polar residues. Disordered stretches follow at residues 102–124 (QSLS…RQKP) and 209–247 (DIPN…QHRL). The segment covering 225 to 239 (FHRDKNNSESDEYKK) has biased composition (basic and acidic residues). 14 C2H2-type zinc fingers span residues 287-309 (YECH…QRRH), 315-337 (YKCG…CRVH), 343-365 (FECL…QRTH), 371-393 (YECS…QRTH), 399-421 (YECG…QRVH), 427-449 (YHCE…SKIH), 455-477 (YECG…QRTH), 483-505 (YECR…RRIH), 511-533 (YECE…QRVH), 539-561 (YKCE…QRTH), 567-589 (YECA…QKIH), 595-617 (YHCD…QRVH), 623-645 (YTCG…RRIH), and 651-673 (YECD…QLLH).

This sequence belongs to the krueppel C2H2-type zinc-finger protein family.

The protein resides in the nucleus. Transcriptional repressor. May play a role as regulator of the ubiquitin-proteasome system and autophagy-lysosomal pathway. The sequence is that of Zinc finger protein 418 from Rattus norvegicus (Rat).